The chain runs to 293 residues: Protein nud-2 (293 aa).

Positions 36–147 (EIEKMMDSEL…EKIAMLESEL (112 aa)) form a coiled coil. The required for interaction with unc-83 isoform c stretch occupies residues 239 to 293 (KSQRVSTGTGAGACINRIVKDLMTKVERLDSILSTIRVSNNSSNNNSSHLTTTRA).

It belongs to the nudE family. Component of a dynein-regulating complex composed of at least lis-1 and nud-2. Interacts with lis-1; the interaction is direct. Interacts (via C-terminus) with unc-83; the interaction is direct, and is required for recruitment of nud-2 to the nuclear envelope. In terms of tissue distribution, expressed in ventral cord neurons, the pharynx, seam cells of the hypodermis and in vulval muscle cells.

Its subcellular location is the nucleus envelope. Part of a complex with lis-1, which is recruited to the nuclear envelope by unc-83, where, in turn, it recruits dynein to the nuclear surface and regulates nuclear migration in hypodermal precursor cells. Plays a role in GABAergic synaptic vesicle localization in the ventral nerve cord. The sequence is that of Protein nud-2 from Caenorhabditis elegans.